We begin with the raw amino-acid sequence, 92 residues long: Large ribosomal subunit protein bL27 (92 aa).

A propeptide spanning residues 1–10 (MLLQLQIQLF) is cleaved from the precursor.

Belongs to the bacterial ribosomal protein bL27 family. Post-translationally, the N-terminus is cleaved by ribosomal processing cysteine protease Prp.

The chain is Large ribosomal subunit protein bL27 from Aster yellows witches'-broom phytoplasma (strain AYWB).